The primary structure comprises 125 residues: Small ribosomal subunit protein eS6 (125 aa).

It belongs to the eukaryotic ribosomal protein eS6 family.

This Pyrococcus horikoshii (strain ATCC 700860 / DSM 12428 / JCM 9974 / NBRC 100139 / OT-3) protein is Small ribosomal subunit protein eS6.